The chain runs to 250 residues: Malonyl-[acyl-carrier protein] O-methyltransferase (250 aa).

The protein belongs to the methyltransferase superfamily.

It carries out the reaction malonyl-[ACP] + S-adenosyl-L-methionine = malonyl-[ACP] methyl ester + S-adenosyl-L-homocysteine. The protein operates within cofactor biosynthesis; biotin biosynthesis. Converts the free carboxyl group of a malonyl-thioester to its methyl ester by transfer of a methyl group from S-adenosyl-L-methionine (SAM). It allows to synthesize pimeloyl-ACP via the fatty acid synthetic pathway. This Neorickettsia risticii (strain Illinois) protein is Malonyl-[acyl-carrier protein] O-methyltransferase.